Reading from the N-terminus, the 641-residue chain is ATP-dependent DNA helicase PIF1 (641 aa).

The tract at residues 1 to 180 (MLSGIEAAAG…LVKRPVEPQA (180 aa)) is PINT. Phosphoserine is present on residues Ser-27 and Ser-151. The interval 167 to 641 (PDTTLVKRPV…SDQENMDPIL (475 aa)) is hydrolyzes ATP in the presence of both magnesium and single-stranded DNA; weak activity in the presence of RNA or double-stranded DNA; No unwinding activity. A disordered region spans residues 173 to 192 (KRPVEPQAGAEPSTEAPRWP). 228–235 (GSAGTGKS) contacts ATP. The DNA-binding element occupies 577-596 (QAYVALSRARSLQGLRVLDF). A disordered region spans residues 622–641 (LESPDDDEAASDQENMDPIL). Positions 624 to 641 (SPDDDEAASDQENMDPIL) are enriched in acidic residues.

Belongs to the helicase family. PIF1 subfamily. Monomer. Interacts with telomerase. Requires Mg(2+) as cofactor. As to expression, weak ubiquitous expression.

It localises to the nucleus. Its subcellular location is the mitochondrion. It catalyses the reaction Couples ATP hydrolysis with the unwinding of duplex DNA at the replication fork by translocating in the 5'-3' direction. This creates two antiparallel DNA single strands (ssDNA). The leading ssDNA polymer is the template for DNA polymerase III holoenzyme which synthesizes a continuous strand.. The enzyme catalyses ATP + H2O = ADP + phosphate + H(+). In terms of biological role, DNA-dependent ATPase and 5'-3' DNA helicase required for the maintenance of both mitochondrial and nuclear genome stability. Efficiently unwinds G-quadruplex (G4) DNA structures and forked RNA-DNA hybrids. Resolves G4 structures, preventing replication pausing and double-strand breaks (DSBs) at G4 motifs. Involved in the maintenance of telomeric DNA. Inhibits telomere elongation, de novo telomere formation and telomere addition to DSBs via catalytic inhibition of telomerase. Reduces the processivity of telomerase by displacing active telomerase from DNA ends. Releases telomerase by unwinding the short telomerase RNA/telomeric DNA hybrid that is the intermediate in the telomerase reaction. Possesses an intrinsic strand annealing activity. The chain is ATP-dependent DNA helicase PIF1 from Homo sapiens (Human).